Consider the following 382-residue polypeptide: tRNA-specific 2-thiouridylase MnmA (382 aa).

Residues alanine 34–serine 41 and leucine 60 contribute to the ATP site. The active-site Nucleophile is cysteine 128. Cysteine 128 and cysteine 224 are oxidised to a cystine. Glycine 152 contacts ATP. An interaction with tRNA region spans residues arginine 174–glutamine 176. The Cysteine persulfide intermediate role is filled by cysteine 224.

Belongs to the MnmA/TRMU family.

Its subcellular location is the cytoplasm. The catalysed reaction is S-sulfanyl-L-cysteinyl-[protein] + uridine(34) in tRNA + AH2 + ATP = 2-thiouridine(34) in tRNA + L-cysteinyl-[protein] + A + AMP + diphosphate + H(+). Catalyzes the 2-thiolation of uridine at the wobble position (U34) of tRNA, leading to the formation of s(2)U34. The protein is tRNA-specific 2-thiouridylase MnmA of Sphingopyxis alaskensis (strain DSM 13593 / LMG 18877 / RB2256) (Sphingomonas alaskensis).